Here is a 241-residue protein sequence, read N- to C-terminus: MAFGPAAMGYDRAITIFSPDGSLYQVDYAFEAVKKGWTAIGIKSKSGVVIASEKRKAQSLLDVDSIEKVFLIDDHVGCSFAGLASDGRVLIDYARNIALQHRLIYDEPVSIDYLTKSVADVKQMYTQHGGVRPFGVALVIAGIDKSVPKLYMTEPSGQYMPYQAVAIGQGYYTATEFLEKNYKEDLTIEDTILLALKALSATLKPNEKLTPNTVEIGYASTQTGLFLKMTSEDKNMYLQKL.

Belongs to the peptidase T1A family. The 20S proteasome core is composed of 14 alpha and 14 beta subunits that assemble into four stacked heptameric rings, resulting in a barrel-shaped structure. The two inner rings, each composed of seven catalytic beta subunits, are sandwiched by two outer rings, each composed of seven alpha subunits. The catalytic chamber with the active sites is on the inside of the barrel. Has a gated structure, the ends of the cylinder being occluded by the N-termini of the alpha-subunits. Is capped at one or both ends by the proteasome regulatory ATPase, PAN.

It is found in the cytoplasm. With respect to regulation, the formation of the proteasomal ATPase PAN-20S proteasome complex, via the docking of the C-termini of PAN into the intersubunit pockets in the alpha-rings, triggers opening of the gate for substrate entry. Interconversion between the open-gate and close-gate conformations leads to a dynamic regulation of the 20S proteasome proteolysis activity. Functionally, component of the proteasome core, a large protease complex with broad specificity involved in protein degradation. This Saccharolobus islandicus (strain M.16.4 / Kamchatka #3) (Sulfolobus islandicus) protein is Proteasome subunit alpha.